Here is a 250-residue protein sequence, read N- to C-terminus: Biosynthetic peptidoglycan transglycosylase (250 aa).

A helical membrane pass occupies residues 15–35; the sequence is AVLLFFVSSLGFVLLYRFVPV.

This sequence belongs to the glycosyltransferase 51 family.

The protein resides in the cell inner membrane. It catalyses the reaction [GlcNAc-(1-&gt;4)-Mur2Ac(oyl-L-Ala-gamma-D-Glu-L-Lys-D-Ala-D-Ala)](n)-di-trans,octa-cis-undecaprenyl diphosphate + beta-D-GlcNAc-(1-&gt;4)-Mur2Ac(oyl-L-Ala-gamma-D-Glu-L-Lys-D-Ala-D-Ala)-di-trans,octa-cis-undecaprenyl diphosphate = [GlcNAc-(1-&gt;4)-Mur2Ac(oyl-L-Ala-gamma-D-Glu-L-Lys-D-Ala-D-Ala)](n+1)-di-trans,octa-cis-undecaprenyl diphosphate + di-trans,octa-cis-undecaprenyl diphosphate + H(+). The protein operates within cell wall biogenesis; peptidoglycan biosynthesis. Functionally, peptidoglycan polymerase that catalyzes glycan chain elongation from lipid-linked precursors. The chain is Biosynthetic peptidoglycan transglycosylase from Bdellovibrio bacteriovorus (strain ATCC 15356 / DSM 50701 / NCIMB 9529 / HD100).